The chain runs to 324 residues: MGSQVRLVIAVCGIYATFLTWSLAQEPLTTSVWPNSAARFSHSSFIVLCQALTAAVVGLCYLKAQRSGYGAREFIRKHWADVAGISLTQALSAPAANHSLQYVDYVGYMLAKSCKLLPIMLVHVLVYRTPIGRDKALVGVLVSGGVALFTLGGAERKQGEASLYGLGMLLVSLFLDGLTNASQDRLLRRPASKKITGAHLMVALNTAIVLWNLAYLVLFDRTQWQGSLQQLHADPAILTYLFTYCACGALGQCFVFFTLEHYSSLVLATVTVTRKMVSMLLSIVVYGHSVRPVQWLGILVVFGGIIWETVKKGQRGSGQKSKQH.

The next 2 helical transmembrane spans lie at 7 to 27 (LVIAVCGIYATFLTWSLAQEP) and 42 to 62 (HSSFIVLCQALTAAVVGLCYL). An N-linked (GlcNAc...) asparagine glycan is attached at N97. The next 7 helical transmembrane spans lie at 106–126 (VGYMLAKSCKLLPIMLVHVLV), 135–155 (KALVGVLVSGGVALFTLGGAE), 161–181 (ASLYGLGMLLVSLFLDGLTNA), 199–219 (HLMVALNTAIVLWNLAYLVLF), 237–257 (ILTYLFTYCACGALGQCFVFF), 265–285 (LVLATVTVTRKMVSMLLSIVV), and 290–310 (VRPVQWLGILVVFGGIIWETV).

It belongs to the nucleotide-sugar transporter family. SLC35B subfamily.

It is found in the endoplasmic reticulum membrane. May be involved in specific transport of UDP-Gal from the cytosol to the Golgi lumen. Involved in the maintenance of optimal conditions for the folding of secretory pathway proteins in the endoplasmic reticulum. The sequence is that of UDP-galactose transporter homolog 1 (HUT1) from Eremothecium gossypii (strain ATCC 10895 / CBS 109.51 / FGSC 9923 / NRRL Y-1056) (Yeast).